Reading from the N-terminus, the 508-residue chain is GMP synthase [glutamine-hydrolyzing] (508 aa).

Residues 1-189 (MIVVLDFGSQ…ALLVCGCEKT (189 aa)) form the Glutamine amidotransferase type-1 domain. Catalysis depends on Cys-78, which acts as the Nucleophile. Active-site residues include His-163 and Glu-165. Positions 190–383 (WGMQNFAQKE…LGVSQDFLMR (194 aa)) constitute a GMPS ATP-PPase domain. 217–223 (SGGVDST) provides a ligand contact to ATP.

Homodimer.

It carries out the reaction XMP + L-glutamine + ATP + H2O = GMP + L-glutamate + AMP + diphosphate + 2 H(+). The protein operates within purine metabolism; GMP biosynthesis; GMP from XMP (L-Gln route): step 1/1. Its function is as follows. Catalyzes the synthesis of GMP from XMP. The chain is GMP synthase [glutamine-hydrolyzing] from Helicobacter acinonychis (strain Sheeba).